The following is a 420-amino-acid chain: Tyrosine--tRNA ligase (420 aa).

Tyr-39 contributes to the L-tyrosine binding site. Residues 44 to 53 (CTAPSLHIGS) carry the 'HIGH' region motif. Tyr-176 and Gln-180 together coordinate L-tyrosine. The short motif at 236–240 (KMGKT) is the 'KMSKS' region element. Lys-239 contributes to the ATP binding site. Residues 349-414 (IPLIDLLYDT…AGKKRHIKIL (66 aa)) form the S4 RNA-binding domain.

The protein belongs to the class-I aminoacyl-tRNA synthetase family. TyrS type 1 subfamily. In terms of assembly, homodimer.

The protein resides in the cytoplasm. It catalyses the reaction tRNA(Tyr) + L-tyrosine + ATP = L-tyrosyl-tRNA(Tyr) + AMP + diphosphate + H(+). Its function is as follows. Catalyzes the attachment of tyrosine to tRNA(Tyr) in a two-step reaction: tyrosine is first activated by ATP to form Tyr-AMP and then transferred to the acceptor end of tRNA(Tyr). This Wolbachia pipientis subsp. Culex pipiens (strain wPip) protein is Tyrosine--tRNA ligase.